The chain runs to 86 residues: Anti-adapter protein IraP (86 aa).

The stretch at 1–36 forms a coiled coil; that stretch reads MKNLIAELLLKLAQKEEESKELCAQVEALEIIVTAM.

It belongs to the IraP family. Interacts with RssB.

The protein resides in the cytoplasm. Inhibits RpoS proteolysis by regulating RssB activity, thereby increasing the stability of the sigma stress factor RpoS especially during phosphate starvation, but also in stationary phase and during nitrogen starvation. Its effect on RpoS stability is due to its interaction with RssB, which probably blocks the interaction of RssB with RpoS, and the consequent delivery of the RssB-RpoS complex to the ClpXP protein degradation pathway. This is Anti-adapter protein IraP from Shigella boydii serotype 4 (strain Sb227).